Consider the following 393-residue polypeptide: Acetylornithine aminotransferase (393 aa).

Residues 100–101 (GA) and Phe-133 contribute to the pyridoxal 5'-phosphate site. Arg-136 contacts N(2)-acetyl-L-ornithine. Position 218 to 221 (218 to 221 (DEVQ)) interacts with pyridoxal 5'-phosphate. Lys-247 bears the N6-(pyridoxal phosphate)lysine mark. Ser-274 serves as a coordination point for N(2)-acetyl-L-ornithine. Thr-275 provides a ligand contact to pyridoxal 5'-phosphate.

Belongs to the class-III pyridoxal-phosphate-dependent aminotransferase family. ArgD subfamily. Homodimer. Pyridoxal 5'-phosphate serves as cofactor.

The protein localises to the cytoplasm. The enzyme catalyses N(2)-acetyl-L-ornithine + 2-oxoglutarate = N-acetyl-L-glutamate 5-semialdehyde + L-glutamate. The protein operates within amino-acid biosynthesis; L-arginine biosynthesis; N(2)-acetyl-L-ornithine from L-glutamate: step 4/4. The polypeptide is Acetylornithine aminotransferase (Caldanaerobacter subterraneus subsp. tengcongensis (strain DSM 15242 / JCM 11007 / NBRC 100824 / MB4) (Thermoanaerobacter tengcongensis)).